The chain runs to 95 residues: Glutamyl-tRNA(Gln) amidotransferase subunit C (95 aa).

Belongs to the GatC family. As to quaternary structure, heterotrimer of A, B and C subunits.

The catalysed reaction is L-glutamyl-tRNA(Gln) + L-glutamine + ATP + H2O = L-glutaminyl-tRNA(Gln) + L-glutamate + ADP + phosphate + H(+). The enzyme catalyses L-aspartyl-tRNA(Asn) + L-glutamine + ATP + H2O = L-asparaginyl-tRNA(Asn) + L-glutamate + ADP + phosphate + 2 H(+). Allows the formation of correctly charged Asn-tRNA(Asn) or Gln-tRNA(Gln) through the transamidation of misacylated Asp-tRNA(Asn) or Glu-tRNA(Gln) in organisms which lack either or both of asparaginyl-tRNA or glutaminyl-tRNA synthetases. The reaction takes place in the presence of glutamine and ATP through an activated phospho-Asp-tRNA(Asn) or phospho-Glu-tRNA(Gln). In Caulobacter vibrioides (strain ATCC 19089 / CIP 103742 / CB 15) (Caulobacter crescentus), this protein is Glutamyl-tRNA(Gln) amidotransferase subunit C.